Consider the following 908-residue polypeptide: UPF0182 protein Csac_0864 (908 aa).

The next 7 helical transmembrane spans lie at 22–42 (FVIS…DLFL), 62–82 (FYVK…VFFV), 98–118 (ISLL…ALIA), 166–186 (FLFY…IVLY), 208–228 (HIFF…KYEM), 253–273 (YFRL…YFFI), and 286–306 (SYIG…YFVV).

The protein belongs to the UPF0182 family.

It localises to the cell membrane. The polypeptide is UPF0182 protein Csac_0864 (Caldicellulosiruptor saccharolyticus (strain ATCC 43494 / DSM 8903 / Tp8T 6331)).